The sequence spans 113 residues: Meiotically up-regulated gene 98 protein, mitochondrial (113 aa).

It is found in the mitochondrion. In terms of biological role, has a role in meiosis. The chain is Meiotically up-regulated gene 98 protein, mitochondrial (mug98) from Schizosaccharomyces pombe (strain 972 / ATCC 24843) (Fission yeast).